Here is a 126-residue protein sequence, read N- to C-terminus: Histone H2B type 1-K (126 aa).

Over residues Met1–Lys12 the composition is skewed to low complexity. A disordered region spans residues Met1–Glu36. Pro2 bears the N-acetylproline mark. Position 3 is an ADP-ribosyl glutamic acid (Glu3). Lys6 carries the N6-(2-hydroxyisobutyryl)lysine; alternate modification. Lys6 is modified (N6-(beta-hydroxybutyryl)lysine; alternate). An N6-acetyllysine; alternate modification is found at Lys6. Lys6 is modified (N6-butyryllysine; alternate). An N6-crotonyllysine; alternate modification is found at Lys6. Position 6 is an N6-lactoyllysine; alternate (Lys6). Lys6 is covalently cross-linked (Glycyl lysine isopeptide (Lys-Gly) (interchain with G-Cter in SUMO2); alternate). Ser7 carries the post-translational modification ADP-ribosylserine. An N6-(beta-hydroxybutyryl)lysine; alternate modification is found at Lys12. N6-acetyllysine; alternate is present on residues Lys12 and Lys13. N6-crotonyllysine; alternate is present on residues Lys12 and Lys13. Lys12 bears the N6-lactoyllysine; alternate mark. Lys13 bears the N6-(2-hydroxyisobutyryl)lysine; alternate mark. Ser15 is modified (phosphoserine; by STK4/MST1). Lys16, Lys17, Lys21, and Lys24 each carry N6-acetyllysine; alternate. An N6-crotonyllysine; alternate mark is found at Lys16, Lys17, Lys21, Lys24, and Lys35. N6-lactoyllysine; alternate is present on residues Lys16, Lys17, Lys21, and Lys24. Lys17 carries the post-translational modification N6-glutaryllysine; alternate. An N6-(2-hydroxyisobutyryl)lysine; alternate mark is found at Lys21, Lys24, and Lys35. Residue Lys21 is modified to N6-(beta-hydroxybutyryl)lysine; alternate. Lys21 is subject to N6-butyryllysine; alternate. Lys21 is covalently cross-linked (Glycyl lysine isopeptide (Lys-Gly) (interchain with G-Cter in SUMO2); alternate). Lys35 is subject to N6-(beta-hydroxybutyryl)lysine; alternate. Position 35 is an N6-glutaryllysine; alternate (Lys35). Lys35 carries the N6-succinyllysine; alternate modification. Residue Lys35 forms a Glycyl lysine isopeptide (Lys-Gly) (interchain with G-Cter in ubiquitin); alternate linkage. Glu36 is modified (polyADP-ribosyl glutamic acid). A Phosphoserine; by AMPK modification is found at Ser37. 3 positions are modified to N6-(2-hydroxyisobutyryl)lysine; alternate: Lys44, Lys47, and Lys58. Position 44 is an N6-lactoyllysine; alternate (Lys44). N6-glutaryllysine; alternate occurs at positions 44 and 47. Position 47 is an N6-methyllysine; alternate (Lys47). Lys58 is modified (N6,N6-dimethyllysine; alternate). The residue at position 80 (Arg80) is a Dimethylated arginine. At Lys86 the chain carries N6-(2-hydroxyisobutyryl)lysine; alternate. Lys86 bears the N6-acetyllysine; alternate mark. Residue Lys86 is modified to N6-lactoyllysine; alternate. Lys86 bears the N6,N6,N6-trimethyllysine; alternate mark. Arg87 and Arg93 each carry omega-N-methylarginine. Lys109 carries the N6-(2-hydroxyisobutyryl)lysine; alternate modification. Residue Lys109 is modified to N6-lactoyllysine; alternate. Residue Lys109 is modified to N6-glutaryllysine; alternate. An N6-methyllysine; alternate modification is found at Lys109. O-linked (GlcNAc) serine glycosylation occurs at Ser113. Thr116 carries the phosphothreonine modification. N6-(2-hydroxyisobutyryl)lysine; alternate occurs at positions 117 and 121. Lys117 carries the N6-(beta-hydroxybutyryl)lysine; alternate modification. 2 positions are modified to N6-lactoyllysine; alternate: Lys117 and Lys121. Residues Lys117 and Lys121 each carry the N6-glutaryllysine; alternate modification. 2 positions are modified to N6-succinyllysine; alternate: Lys117 and Lys121. An N6-methylated lysine; alternate modification is found at Lys117. Lys121 is covalently cross-linked (Glycyl lysine isopeptide (Lys-Gly) (interchain with G-Cter in ubiquitin); alternate).

The protein belongs to the histone H2B family. The nucleosome is a histone octamer containing two molecules each of H2A, H2B, H3 and H4 assembled in one H3-H4 heterotetramer and two H2A-H2B heterodimers. The octamer wraps approximately 147 bp of DNA. In terms of processing, monoubiquitination at Lys-35 (H2BK34Ub) by the MSL1/MSL2 dimer is required for histone H3 'Lys-4' (H3K4me) and 'Lys-79' (H3K79me) methylation and transcription activation at specific gene loci, such as HOXA9 and MEIS1 loci. Similarly, monoubiquitination at Lys-121 (H2BK120Ub) by the RNF20/40 complex gives a specific tag for epigenetic transcriptional activation and is also prerequisite for histone H3 'Lys-4' and 'Lys-79' methylation. It also functions cooperatively with the FACT dimer to stimulate elongation by RNA polymerase II. H2BK120Ub also acts as a regulator of mRNA splicing: deubiquitination by USP49 is required for efficient cotranscriptional splicing of a large set of exons. Post-translationally, phosphorylated on Ser-15 (H2BS14ph) by STK4/MST1 during apoptosis; which facilitates apoptotic chromatin condensation. Also phosphorylated on Ser-15 in response to DNA double strand breaks (DSBs), and in correlation with somatic hypermutation and immunoglobulin class-switch recombination. Phosphorylation at Ser-37 (H2BS36ph) by AMPK in response to stress promotes transcription. GlcNAcylation at Ser-113 promotes monoubiquitination of Lys-121. It fluctuates in response to extracellular glucose, and associates with transcribed genes. In terms of processing, ADP-ribosylated by PARP1 or PARP2 on Ser-7 (H2BS6ADPr) in response to DNA damage. H2BS6ADPr promotes recruitment of CHD1L. Mono-ADP-ribosylated on Glu-3 (H2BE2ADPr) by PARP3 in response to single-strand breaks. Poly ADP-ribosylation on Glu-36 (H2BE35ADPr) by PARP1 regulates adipogenesis: it inhibits phosphorylation at Ser-37 (H2BS36ph), thereby blocking expression of pro-adipogenetic genes. Post-translationally, crotonylation (Kcr) is specifically present in male germ cells and marks testis-specific genes in post-meiotic cells, including X-linked genes that escape sex chromosome inactivation in haploid cells. Crotonylation marks active promoters and enhancers and confers resistance to transcriptional repressors. It is also associated with post-meiotically activated genes on autosomes. Lactylated in macrophages by EP300/P300 by using lactoyl-CoA directly derived from endogenous or exogenous lactate, leading to stimulates gene transcription.

Its subcellular location is the nucleus. The protein resides in the chromosome. Core component of nucleosome. Nucleosomes wrap and compact DNA into chromatin, limiting DNA accessibility to the cellular machineries which require DNA as a template. Histones thereby play a central role in transcription regulation, DNA repair, DNA replication and chromosomal stability. DNA accessibility is regulated via a complex set of post-translational modifications of histones, also called histone code, and nucleosome remodeling. This chain is Histone H2B type 1-K, found in Bos taurus (Bovine).